A 620-amino-acid chain; its full sequence is Endoglucanase 10 (620 aa).

The disordered stretch occupies residues 1 to 26; it reads MFGRDPWGGPLEISNADSATDDDRSR. A helical; Signal-anchor for type II membrane protein transmembrane segment spans residues 72-92; that stretch reads IFMWTVGTILGVGLFIGFVMM. Aspartate 165 acts as the Nucleophile in catalysis. Asparagine 216, asparagine 314, asparagine 323, asparagine 344, asparagine 408, and asparagine 425 each carry an N-linked (GlcNAc...) asparagine glycan. Catalysis depends on residues histidine 513 and aspartate 561. Asparagine 567 carries N-linked (GlcNAc...) asparagine glycosylation. Glutamate 570 is an active-site residue.

Belongs to the glycosyl hydrolase 9 (cellulase E) family. Ubiquitous.

It localises to the membrane. It carries out the reaction Endohydrolysis of (1-&gt;4)-beta-D-glucosidic linkages in cellulose, lichenin and cereal beta-D-glucans.. In Oryza sativa subsp. japonica (Rice), this protein is Endoglucanase 10 (GLU2).